The chain runs to 1875 residues: Neuron navigator 1 (1875 aa).

An N-acetylmethionine modification is found at methionine 1. The segment at 1–63 is disordered; sequence MLGSSVKSVQ…GGSGSMAKAS (63 aa). Serine 93 and serine 145 each carry phosphoserine. Disordered stretches follow at residues 115–230 and 280–339; these read SDDM…EERA and SSLR…VGGS. Phosphothreonine is present on threonine 162. Residues serine 197 and serine 202 each carry the phosphoserine modification. A coiled-coil region spans residues 258-283; sequence ESQRKRTVQNVLDLRQNLEETMSSLR. Residues 280 to 291 show a composition bias toward polar residues; that stretch reads SSLRGSQVTHSS. 5 positions are modified to phosphoserine: serine 299, serine 311, serine 315, serine 365, and serine 394. Residues 304 to 318 are compositionally biased toward low complexity; that stretch reads PRSVSSLSNRSSPLS. Disordered regions lie at residues 391–463 and 477–783; these read GYMS…RTDS and SESE…AELP. Low complexity-rich tracts occupy residues 414–428 and 436–456; these read DESSSISSGLSDASD and NASSSLNSLPTTPTASRRSST. Phosphoserine is present on residues serine 455, serine 477, serine 479, and serine 493. Residues 479–489 are compositionally biased toward basic and acidic residues; that stretch reads SEEKTPKKLEY. The span at 506 to 522 shows a compositional bias: basic and acidic residues; it reads ERPESCDDASKGGELKK. Serine 531 carries the post-translational modification Phosphoserine. Threonine 537 carries the post-translational modification Phosphothreonine. The residue at position 544 (serine 544) is a Phosphoserine. Threonine 547 carries the post-translational modification Phosphothreonine. The span at 558–569 shows a compositional bias: basic and acidic residues; that stretch reads GKPEGKATDKGK. Position 575 is a phosphothreonine (threonine 575). Over residues 584-594 the composition is skewed to basic and acidic residues; it reads AGRDRLSDAKK. 2 stretches are compositionally biased toward polar residues: residues 618–638 and 648–658; these read GTATVMQTGSSATLSKIQKSS and RKTSLDVSNSV. Serine 651 bears the Phosphoserine mark. The residue at position 690 (arginine 690) is an Omega-N-methylarginine. Composition is skewed to polar residues over residues 696–712 and 726–735; these read VSSSIDPSLLSTKQGGL and GRSTPAPVNQ. The stretch at 733-758 forms a coiled coil; the sequence is VNQTDREKEKAKAKAVALDSDNISLK. Phosphoserine is present on residues serine 752, serine 756, serine 762, serine 799, and serine 810. Residues 753-772 are compositionally biased toward polar residues; sequence DNISLKSIGSPESTPKNQAS. 2 disordered regions span residues 800 to 840 and 893 to 982; these read LANL…PLPS and MSLP…SPPA. Composition is skewed to low complexity over residues 807–818 and 893–902; these read NSNSLDLPSSSD and MSLPSAFPSS. Position 998 is a phosphoserine (serine 998). The residue at position 1004 (threonine 1004) is a Phosphothreonine. The stretch at 1070–1161 forms a coiled coil; that stretch reads SSAEERMQSE…SEAQAVIQGA (92 aa). Threonine 1168 is subject to Phosphothreonine. 4 disordered regions span residues 1172–1202, 1242–1306, 1359–1381, and 1808–1841; these read LRIKRQNSSDSISSLNSITSHSSIGSSKDAD, ATPD…KEVS, VAPGPSSGCTPGQVPGSSALSSP, and KLYHLPPPSVGPHSTASPPEDRTVKDSTPNSLDS. Serine 1179 carries the post-translational modification Phosphoserine. Low complexity predominate over residues 1179–1198; sequence SSDSISSLNSITSHSSIGSS. Over residues 1244–1259 the composition is skewed to polar residues; it reads PDSSAPSSPKLQHGST. Positions 1260–1281 are enriched in low complexity; the sequence is ETASPSIKSSTSSSVGTEVTET. Serine 1263 is modified (phosphoserine). A coiled-coil region spans residues 1301–1360; the sequence is EKKEVSELRSELWEKEMKLTDIRLEALNSAHQLDQLRETMHNMQLEVDLLKAENDRLKVA. Polar residues predominate over residues 1365–1381; the sequence is SGCTPGQVPGSSALSSP. A Phosphoserine modification is found at serine 1380.

The protein belongs to the Nav/unc-53 family. As to quaternary structure, interacts with tubulin. In terms of tissue distribution, expressed in heart and brain. Present in brain (at protein level). In adult brain, found almost exclusively in areas of secondary neurogenesis from the hippocampus and the subventricular zone.

It is found in the cytoplasm. The protein localises to the cytoskeleton. Its function is as follows. May be involved in neuronal migration. In Mus musculus (Mouse), this protein is Neuron navigator 1 (Nav1).